The sequence spans 363 residues: Pyrimidine monooxygenase RutA (363 aa).

FMN contacts are provided by residues 49-50 (IK), asparagine 115, glutamate 124, 140-141 (RY), and serine 190.

The protein belongs to the NtaA/SnaA/DszA monooxygenase family. RutA subfamily.

The catalysed reaction is uracil + FMNH2 + NADH + O2 = (Z)-3-ureidoacrylate + FMN + NAD(+) + H2O + H(+). It catalyses the reaction thymine + FMNH2 + NADH + O2 = (Z)-2-methylureidoacrylate + FMN + NAD(+) + H2O + H(+). Catalyzes the pyrimidine ring opening between N-3 and C-4 by an unusual flavin hydroperoxide-catalyzed mechanism, adding oxygen atoms in the process to yield ureidoacrylate peracid, that immediately reacts with FMN forming ureidoacrylate and FMN-N(5)-oxide. The FMN-N(5)-oxide reacts spontaneously with NADH to produce FMN. Requires the flavin reductase RutF to regenerate FMN in vivo. This is Pyrimidine monooxygenase RutA from Klebsiella variicola (strain At-22).